Reading from the N-terminus, the 539-residue chain is Lysosomal cobalamin transport escort protein LMBD1 (539 aa).

Topologically, residues 1–7 (MATGSTE) are extracellular. Residues 8–28 (LLIGWCIFGVLLLAILAFCWV) traverse the membrane as a helical segment. Residues 29-47 (YVRKYQSHQESEVISTITA) are Cytoplasmic-facing. Residues 48 to 68 (ISSLAIALITSALLPVDIFLV) traverse the membrane as a helical segment. Topologically, residues 69 to 98 (SFMKNHNGTFKDWAESNTTRLQIENTVLIG) are extracellular. 2 N-linked (GlcNAc...) asparagine glycosylation sites follow: Asn75 and Asn85. Residues 99–119 (YYTLYSIILFCVFLWIPFVYF) form a helical membrane-spanning segment. Topologically, residues 120–142 (YYEEKDDTDGSQCSQIANAFKYT) are cytoplasmic. A helical transmembrane segment spans residues 143 to 163 (SGFILVCSCLLLIGAFAPLDI). Residues 164–186 (HTNKNSTDLDKIKLLFLELGSSN) are Extracellular-facing. Asn168 carries an N-linked (GlcNAc...) asparagine glycan. A helical transmembrane segment spans residues 187-207 (GLAALSFSISSLTLIGMLAAI). Residues 208–303 (TYTAYGMSAL…KCCIVIRPFK (96 aa)) are Cytoplasmic-facing. The chain crosses the membrane as a helical span at residues 304–324 (IIWGILFILVALLFIVSLFLS). Residues 325–362 (NLDKALHSAGIDSGFIIFGTNLTNPLNMLLPVLQTVFP) are Extracellular-facing. A glycan (N-linked (GlcNAc...) asparagine) is linked at Asn345. A helical transmembrane segment spans residues 363-383 (LDYIFITIITMYFIFTSMAGI). At 384 to 406 (RNMGIWFFWIRLYKIRRRRTRPQ) the chain is on the cytoplasmic side. A helical transmembrane segment spans residues 407 to 427 (ALLFLCMILLLIVLHTSYMIY). The Extracellular segment spans residues 428–484 (SLAPQYVMYGSQKYLWENNSTQETAIGNSSASVLKDCDASAPEDQCTVTRTYLFLHK). N-linked (GlcNAc...) asparagine glycosylation is found at Asn445, Asn446, and Asn455. A helical membrane pass occupies residues 485–505 (FWFFSSIYYFGNWAFIVVFVI). Topologically, residues 506-539 (GLIVSCCKGKKSVIEGEVEDDDSDLSDDEEHPYA) are cytoplasmic.

This sequence belongs to the LIMR family. LMBRD1 subfamily.

The protein resides in the endoplasmic reticulum membrane. It is found in the lysosome membrane. Its subcellular location is the cell membrane. Lysosomal membrane chaperone required to export cobalamin (vitamin B12) from the lysosome to the cytosol, allowing its conversion to cofactors. Targets ABCD4 transporter from the endoplasmic reticulum to the lysosome. Then forms a complex with lysosomal ABCD4 and cytoplasmic MMACHC to transport cobalamin across the lysosomal membrane. May play a role in mediating and regulating the internalization of the insulin receptor. The polypeptide is Lysosomal cobalamin transport escort protein LMBD1 (lmbrd1) (Xenopus tropicalis (Western clawed frog)).